Here is a 303-residue protein sequence, read N- to C-terminus: Dihydroorotate dehydrogenase B (NAD(+)), catalytic subunit (303 aa).

Residues Ser-23 and 47–48 each bind FMN; that span reads KS. Substrate is bound by residues Lys-47, 71 to 75, and Asn-125; that span reads NAMGL. An FMN-binding site is contributed by Asn-125. The active-site Nucleophile is Cys-128. FMN contacts are provided by Lys-163 and Ile-189. Position 190 to 191 (190 to 191) interacts with substrate; sequence NT. FMN-binding positions include Gly-215, 241 to 242, and 263 to 264; these read GG and GT.

It belongs to the dihydroorotate dehydrogenase family. Type 1 subfamily. As to quaternary structure, heterotetramer of 2 PyrK and 2 PyrD type B subunits. It depends on FMN as a cofactor.

It is found in the cytoplasm. It carries out the reaction (S)-dihydroorotate + NAD(+) = orotate + NADH + H(+). The protein operates within pyrimidine metabolism; UMP biosynthesis via de novo pathway; orotate from (S)-dihydroorotate (NAD(+) route): step 1/1. Its function is as follows. Catalyzes the conversion of dihydroorotate to orotate with NAD(+) as electron acceptor. In Pyrococcus horikoshii (strain ATCC 700860 / DSM 12428 / JCM 9974 / NBRC 100139 / OT-3), this protein is Dihydroorotate dehydrogenase B (NAD(+)), catalytic subunit (pyrD).